The following is a 132-amino-acid chain: MRHRKSGRQLNRNSSHRQAMFRNMASSLVRHEVIKTTVAKAKELRRVVEPLITLAKSDSVANRRLAFARTRDAEVVGKLFNELGPRYQERPGGYTRILKCGLRTGDKAPMAYIELVGRPEDAEAVEADDSAE.

The protein belongs to the bacterial ribosomal protein bL17 family. Part of the 50S ribosomal subunit. Contacts protein L32.

This chain is Large ribosomal subunit protein bL17, found in Shewanella woodyi (strain ATCC 51908 / MS32).